A 553-amino-acid chain; its full sequence is MSDIALTVSILALVAVVGLFIGNVKFRGVGLGIGGVLFGGIIVGHFVSQAGMTLSSDMLHVIQEFGLILFVYTIGIQVGPGFFASLRVSGLRLNLFAVLIVIIGGLVTAILHKLFDIPLPVVLGIFSGAVTNTPALGAGQQILRDLGTPMAMVDQMGMSYAMAYPFGICGILFTMWMLRVIFRVNVETEAQQHESTRTNGGALIRTINIRVENPNLHNLAIKDVPILNGDKVICSRLKREETLKVPSPETVIQLGDLLHLVGQPADLHNAQLVIGQEVDTSLSTKGTDLRVARVVVTNENVLGKRIRDLHFKERYDVVISRLNRAGVELVASSDISLQFGDILNLVGRPSAIDAVANVLGNAQQKLQQVQMLPVFIGIGLGVLLGSIPVFVPGFPAALKLGLAGGPLIMALILGRIGSIGKLYWFMPPSANLALRELGIVLFLSVVGLKSGGDFIHTLVDGEGLSWIGYGALITAVPLITVGILARMLAKMNYLTMCGMLAGSMTDPPALAFANNLHPTSGAAALSYATVYPLVMFLRIITPQLLAVLFWSIG.

The next 5 helical transmembrane spans lie at 4–24, 28–48, 65–85, 95–115, and 158–178; these read IALTVSILALVAVVGLFIGNV, GVGLGIGGVLFGGIIVGHFVS, FGLILFVYTIGIQVGPGFFAS, LFAVLIVIIGGLVTAILHKLF, and MSYAMAYPFGICGILFTMWML. 2 RCK C-terminal domains span residues 191-276 and 279-361; these read QQHE…VIGQ and DTSL…VLGN. 6 consecutive transmembrane segments (helical) span residues 371 to 391, 393 to 413, 439 to 459, 464 to 484, 493 to 513, and 533 to 553; these read MLPVFIGIGLGVLLGSIPVFV, GFPAALKLGLAGGPLIMALIL, IVLFLSVVGLKSGGDFIHTLV, LSWIGYGALITAVPLITVGIL, YLTMCGMLAGSMTDPPALAFA, and LVMFLRIITPQLLAVLFWSIG.

This sequence belongs to the AAE transporter (TC 2.A.81) family. YidE subfamily.

The protein resides in the cell membrane. This chain is Putative transport protein YidE, found in Escherichia coli O6:H1 (strain CFT073 / ATCC 700928 / UPEC).